The following is a 341-amino-acid chain: tRNA N6-adenosine threonylcarbamoyltransferase (341 aa).

Residues histidine 117 and histidine 121 each coordinate Fe cation. Substrate-binding positions include 140 to 144 (VVSGG), aspartate 173, glycine 186, and asparagine 278. Aspartate 306 is a Fe cation binding site.

Belongs to the KAE1 / TsaD family. Requires Fe(2+) as cofactor.

It localises to the cytoplasm. The enzyme catalyses L-threonylcarbamoyladenylate + adenosine(37) in tRNA = N(6)-L-threonylcarbamoyladenosine(37) in tRNA + AMP + H(+). Required for the formation of a threonylcarbamoyl group on adenosine at position 37 (t(6)A37) in tRNAs that read codons beginning with adenine. Is involved in the transfer of the threonylcarbamoyl moiety of threonylcarbamoyl-AMP (TC-AMP) to the N6 group of A37, together with TsaE and TsaB. TsaD likely plays a direct catalytic role in this reaction. In Symbiobacterium thermophilum (strain DSM 24528 / JCM 14929 / IAM 14863 / T), this protein is tRNA N6-adenosine threonylcarbamoyltransferase.